Here is a 362-residue protein sequence, read N- to C-terminus: N-acylethanolamine-hydrolyzing acid amidase (362 aa).

A signal peptide spans 1–33 (MGTLATRAACHGAHLALALLLLLSLSGPWLSAV). Asparagine 42 and asparagine 112 each carry an N-linked (GlcNAc...) asparagine glycan. Cysteine 131 functions as the Nucleophile in the catalytic mechanism. N-linked (GlcNAc...) asparagine glycans are attached at residues asparagine 314 and asparagine 338.

This sequence belongs to the acid ceramidase family. Heterodimer of an alpha and a beta subunit, produced by autocatalytic cleavage. N-glycosylated. Tunicamycin treatment causes a reduction in specific activity against N-palmitoylethanolamine. Post-translationally, autoproteolytic cleavage at pH 4.5 gives rise to the alpha and beta subunit. Cleavage gives rise to a conformation change that activates the enzyme. The same catalytic Cys residue mediates the autoproteolytic cleavage and subsequent hydrolysis of lipid substrates.

It is found in the lysosome. The protein resides in the membrane. The catalysed reaction is N-hexadecanoylethanolamine + H2O = ethanolamine + hexadecanoate. The enzyme catalyses an N-(long-chain fatty acyl)ethanolamine + H2O = a long-chain fatty acid + ethanolamine. It carries out the reaction N-dodecanoylethanolamine + H2O = dodecanoate + ethanolamine. It catalyses the reaction N-tetradecanoylethanolamine + H2O = tetradecanoate + ethanolamine. The catalysed reaction is an N-acylsphing-4-enine + H2O = sphing-4-enine + a fatty acid. The enzyme catalyses N-hexadecanoylsphing-4-enine + H2O = sphing-4-enine + hexadecanoate. It carries out the reaction N-dodecanoylsphing-4-enine + H2O = dodecanoate + sphing-4-enine. Its pathway is lipid metabolism; fatty acid metabolism. Its function is as follows. Degrades bioactive fatty acid amides to their corresponding acids, with the following preference: N-palmitoylethanolamine &gt; N-myristoylethanolamine &gt; N-stearoylethanolamine &gt; N-oleoylethanolamine &gt; N-linoleoylethanolamine &gt; N-arachidonoylethanolamine. The sequence is that of N-acylethanolamine-hydrolyzing acid amidase from Mus musculus (Mouse).